The primary structure comprises 600 residues: Probable methyltransferase PMT7 (600 aa).

Topologically, residues Met-1 to Gln-15 are cytoplasmic. The chain crosses the membrane as a helical; Signal-anchor for type II membrane protein span at residues Met-16–Asn-36. Residues Asn-37 to Leu-600 are Lumenal-facing. N-linked (GlcNAc...) asparagine glycans are attached at residues Asn-49, Asn-98, Asn-110, Asn-157, Asn-200, Asn-204, Asn-334, Asn-447, and Asn-484.

This sequence belongs to the methyltransferase superfamily.

Its subcellular location is the golgi apparatus membrane. This Arabidopsis thaliana (Mouse-ear cress) protein is Probable methyltransferase PMT7.